Reading from the N-terminus, the 330-residue chain is Aspartate--ammonia ligase (330 aa).

This sequence belongs to the class-II aminoacyl-tRNA synthetase family. AsnA subfamily.

The protein localises to the cytoplasm. The enzyme catalyses L-aspartate + NH4(+) + ATP = L-asparagine + AMP + diphosphate + H(+). It participates in amino-acid biosynthesis; L-asparagine biosynthesis; L-asparagine from L-aspartate (ammonia route): step 1/1. The protein is Aspartate--ammonia ligase of Escherichia coli O81 (strain ED1a).